The primary structure comprises 230 residues: UPF0494 membrane protein C1348.07 (230 aa).

3 helical membrane passes run 78–98, 120–140, and 148–168; these read WPLLIIWCILIVFAIDKNFEV, IWGPIAIYICLFILLLLGLIY, and AIPLISIVIAAVVVIIAVAMV.

This sequence belongs to the UPF0494 family.

The protein resides in the vacuole. It is found in the membrane. This chain is UPF0494 membrane protein C1348.07, found in Schizosaccharomyces pombe (strain 972 / ATCC 24843) (Fission yeast).